We begin with the raw amino-acid sequence, 236 residues long: Ureidoacrylate amidohydrolase RutB (236 aa).

Residue D24 is the Proton acceptor of the active site. Residue K133 is part of the active site. C166 functions as the Nucleophile in the catalytic mechanism.

This sequence belongs to the isochorismatase family. RutB subfamily.

It carries out the reaction (Z)-3-ureidoacrylate + H2O + H(+) = (Z)-3-aminoacrylate + NH4(+) + CO2. It catalyses the reaction (Z)-3-ureidoacrylate + H2O = (Z)-3-aminoacrylate + carbamate + H(+). The catalysed reaction is (Z)-2-methylureidoacrylate + H2O + H(+) = (Z)-2-methylaminoacrylate + NH4(+) + CO2. In terms of biological role, hydrolyzes ureidoacrylate to form aminoacrylate and carbamate. The carbamate hydrolyzes spontaneously, thereby releasing one of the nitrogen atoms of the pyrimidine ring as ammonia and one of its carbon atoms as CO2. The sequence is that of Ureidoacrylate amidohydrolase RutB from Klebsiella variicola (strain At-22).